The chain runs to 179 residues: Orotate phosphoribosyltransferase (179 aa).

Residues arginine 94, lysine 95, lysine 98, histidine 100, and 120 to 128 each bind 5-phospho-alpha-D-ribose 1-diphosphate; that span reads EDTSTTGAS. Positions 124 and 152 each coordinate orotate.

It belongs to the purine/pyrimidine phosphoribosyltransferase family. PyrE subfamily. As to quaternary structure, homodimer. Mg(2+) serves as cofactor.

The catalysed reaction is orotidine 5'-phosphate + diphosphate = orotate + 5-phospho-alpha-D-ribose 1-diphosphate. It participates in pyrimidine metabolism; UMP biosynthesis via de novo pathway; UMP from orotate: step 1/2. Functionally, catalyzes the transfer of a ribosyl phosphate group from 5-phosphoribose 1-diphosphate to orotate, leading to the formation of orotidine monophosphate (OMP). This Mycobacterium leprae (strain TN) protein is Orotate phosphoribosyltransferase.